An 849-amino-acid chain; its full sequence is Pre-mRNA-processing ATP-dependent RNA helicase PRP5 (849 aa).

A coiled-coil region spans residues 13-81; sequence ESLLEERRKK…RKRKNEFRKS (69 aa). The segment at 28 to 138 is disordered; that stretch reads QKKAQFDAQK…PEHDNEKDPL (111 aa). Positions 38 to 54 are enriched in polar residues; it reads ENQTSRNDIVTNSLEGK. Positions 55 to 85 are enriched in basic and acidic residues; sequence QTTEKFTERQERVKEELRKRKNEFRKSDEPV. Residues 89–102 show a composition bias toward basic residues; that stretch reads PSKKKSKRSKVKKK. Residues 120 to 138 are compositionally biased toward basic and acidic residues; it reads RSKEHIQKVPEHDNEKDPL. Residues 255-284 carry the Q motif motif; sequence TKWSQLGLSTDTMVLITEKLHFGSLTPIQS. Residues 287–467 form the Helicase ATP-binding domain; sequence LPAIMSGRDV…VRVLHSPISI (181 aa). 300–307 contributes to the ATP binding site; sequence SKTGSGKT. A DEAD box motif is present at residues 415 to 418; sequence DEAD. Residues 502–661 form the Helicase C-terminal domain; sequence ERSEFFDEVQ…LDPLQAKELQ (160 aa). Basic and acidic residues predominate over residues 689–728; the sequence is NIKSKREEAQNKDLELKKNDKRSDDLEKKINNPHEGHDSE. The interval 689 to 731 is disordered; that stretch reads NIKSKREEAQNKDLELKKNDKRSDDLEKKINNPHEGHDSEPES.

Belongs to the DEAD box helicase family. DDX46/PRP5 subfamily. In terms of assembly, interacts with the U2 snRNP and HSH155.

The protein localises to the nucleus. The catalysed reaction is ATP + H2O = ADP + phosphate + H(+). ATP-dependent RNA helicase involved spliceosome assembly and in nuclear splicing. Catalyzes an ATP-dependent conformational change of U2 snRNP. Bridges U1 and U2 snRNPs and enables stable U2 snRNP association with intron RNA. The chain is Pre-mRNA-processing ATP-dependent RNA helicase PRP5 (PRP5) from Saccharomyces cerevisiae (strain YJM789) (Baker's yeast).